The following is a 216-amino-acid chain: FMN-dependent NADH:quinone oxidoreductase (216 aa).

Residues Ser-10 and 15–17 contribute to the FMN site; that span reads SIS.

Belongs to the azoreductase type 1 family. As to quaternary structure, homodimer. It depends on FMN as a cofactor.

It catalyses the reaction 2 a quinone + NADH + H(+) = 2 a 1,4-benzosemiquinone + NAD(+). It carries out the reaction N,N-dimethyl-1,4-phenylenediamine + anthranilate + 2 NAD(+) = 2-(4-dimethylaminophenyl)diazenylbenzoate + 2 NADH + 2 H(+). Its function is as follows. Quinone reductase that provides resistance to thiol-specific stress caused by electrophilic quinones. Also exhibits azoreductase activity. Catalyzes the reductive cleavage of the azo bond in aromatic azo compounds to the corresponding amines. The protein is FMN-dependent NADH:quinone oxidoreductase of Nocardia farcinica (strain IFM 10152).